Consider the following 581-residue polypeptide: Membrane protein insertase YidC (581 aa).

Residues 7-27 form a helical membrane-spanning segment; the sequence is ILIVALAVVSYLMVLQWNEDY. The tract at residues 41–62 is disordered; the sequence is AATPALPDTPADTASTGGDDIP. The next 5 helical transmembrane spans lie at 365–385, 388–408, 458–478, 489–509, and 536–556; these read TVDY…LEVI, LLGN…LIFF, LGGC…YWVL, WMFW…PIIM, and PIIF…YWVV.

It belongs to the OXA1/ALB3/YidC family. Type 1 subfamily. Interacts with the Sec translocase complex via SecD. Specifically interacts with transmembrane segments of nascent integral membrane proteins during membrane integration.

Its subcellular location is the cell inner membrane. Required for the insertion and/or proper folding and/or complex formation of integral membrane proteins into the membrane. Involved in integration of membrane proteins that insert both dependently and independently of the Sec translocase complex, as well as at least some lipoproteins. Aids folding of multispanning membrane proteins. This is Membrane protein insertase YidC from Ectopseudomonas mendocina (strain ymp) (Pseudomonas mendocina).